The sequence spans 575 residues: Eukaryotic translation initiation factor 3 subunit D (575 aa).

2 disordered regions span residues 36 to 66 (PYSK…YGNR) and 103 to 177 (STRT…DASV). The segment covering 39-59 (KGDKLGRMADWTEGKDRERGG) has biased composition (basic and acidic residues). Positions 109–144 (FGRGGGTVFGRGRGQRGGQAQRGGRGTFQRVGGRGG) are enriched in gly residues. Residues 163-174 (GWRDDKPQRNRD) are compositionally biased toward basic and acidic residues. Residues 302 to 316 (NLDMVTVNENAADAP) form an RNA gate region.

It belongs to the eIF-3 subunit D family. As to quaternary structure, component of the eukaryotic translation initiation factor 3 (eIF-3) complex.

Its subcellular location is the cytoplasm. In terms of biological role, mRNA cap-binding component of the eukaryotic translation initiation factor 3 (eIF-3) complex, which is involved in protein synthesis of a specialized repertoire of mRNAs and, together with other initiation factors, stimulates binding of mRNA and methionyl-tRNAi to the 40S ribosome. The eIF-3 complex specifically targets and initiates translation of a subset of mRNAs involved in cell proliferation. In the eIF-3 complex, eif3d specifically recognizes and binds the 7-methylguanosine cap of a subset of mRNAs. In Phaeosphaeria nodorum (strain SN15 / ATCC MYA-4574 / FGSC 10173) (Glume blotch fungus), this protein is Eukaryotic translation initiation factor 3 subunit D.